The primary structure comprises 66 residues: Sec-independent protein translocase protein TatA (66 aa).

Residues Met1–Arg21 form a helical membrane-spanning segment. Residues Ala43 to Glu66 are disordered. A compositionally biased stretch (basic and acidic residues) spans Pro50 to Glu66.

The protein belongs to the TatA/E family. As to quaternary structure, the Tat system comprises two distinct complexes: a TatABC complex, containing multiple copies of TatA, TatB and TatC subunits, and a separate TatA complex, containing only TatA subunits. Substrates initially bind to the TatABC complex, which probably triggers association of the separate TatA complex to form the active translocon.

The protein resides in the cell inner membrane. In terms of biological role, part of the twin-arginine translocation (Tat) system that transports large folded proteins containing a characteristic twin-arginine motif in their signal peptide across membranes. TatA could form the protein-conducting channel of the Tat system. This is Sec-independent protein translocase protein TatA from Pelagibacter ubique (strain HTCC1062).